The primary structure comprises 124 residues: Large ribosomal subunit protein bL12 (124 aa).

This sequence belongs to the bacterial ribosomal protein bL12 family. Homodimer. Part of the ribosomal stalk of the 50S ribosomal subunit. Forms a multimeric L10(L12)X complex, where L10 forms an elongated spine to which 2 to 4 L12 dimers bind in a sequential fashion. Binds GTP-bound translation factors.

Its function is as follows. Forms part of the ribosomal stalk which helps the ribosome interact with GTP-bound translation factors. Is thus essential for accurate translation. The sequence is that of Large ribosomal subunit protein bL12 from Bacteroides fragilis (strain ATCC 25285 / DSM 2151 / CCUG 4856 / JCM 11019 / LMG 10263 / NCTC 9343 / Onslow / VPI 2553 / EN-2).